Here is a 344-residue protein sequence, read N- to C-terminus: Sorting nexin-16 (344 aa).

The segment covering 1–10 has biased composition (pro residues); the sequence is MATPYVPVPM. The interval 1–72 is disordered; it reads MATPYVPVPM…SASSMCGSPL (72 aa). Positions 14–26 are enriched in polar residues; that stretch reads NSASSFTNNRNQR. Over residues 27–40 the composition is skewed to low complexity; that stretch reads SSSFGSVSTSSTSS. Over residues 52–68 the composition is skewed to polar residues; it reads LKQTNVQDQMDSASSMC. The PX domain maps to 105 to 218; it reads DRPSTPTILG…EFLCLDDPPG (114 aa). Residues Arg144, Thr146, and Arg184 each coordinate a 1,2-diacyl-sn-glycero-3-phospho-(1D-myo-inositol-3-phosphate). Ser222 bears the Phosphoserine mark. A coiled-coil region spans residues 223–278; that stretch reads LEESRAFCETLEETNYHLQRELLEKQKEVESLKKLLGEKQLHIDALETRIRTLSLE.

Belongs to the sorting nexin family. In terms of assembly, homooligomer. Interacts with EGFR.

It is found in the early endosome membrane. The protein localises to the late endosome membrane. Its subcellular location is the cytoplasm. The protein resides in the lysosome. Its function is as follows. May be involved in several stages of intracellular trafficking. Plays a role in protein transport from early to late endosomes. Plays a role in protein transport to the lysosome. Promotes degradation of EGFR after EGF signaling. The polypeptide is Sorting nexin-16 (Snx16) (Mus musculus (Mouse)).